A 139-amino-acid polypeptide reads, in one-letter code: Thioredoxin H-type (139 aa).

A Thioredoxin domain is found at 20–132 (ELAGGNVHLI…LHKKITAILD (113 aa)). Catalysis depends on nucleophile residues C58 and C61. An intrachain disulfide couples C58 to C61.

It is found in the cytoplasm. Functionally, participates in various redox reactions through the reversible oxidation of the active center dithiol to a disulfide. The H form is known to activate a number of cytosolic enzymes. This chain is Thioredoxin H-type, found in Populus jackii (Balm of Gilead).